Reading from the N-terminus, the 333-residue chain is Adenosine deaminase (333 aa).

Residues His-12 and His-14 each coordinate Zn(2+). Residues His-14, Asp-16, and Gly-170 each contribute to the substrate site. Zn(2+) is bound at residue His-197. The active-site Proton donor is Glu-200. Position 278 (Asp-278) interacts with Zn(2+). Position 279 (Asp-279) interacts with substrate.

It belongs to the metallo-dependent hydrolases superfamily. Adenosine and AMP deaminases family. Adenosine deaminase subfamily. Zn(2+) is required as a cofactor.

It carries out the reaction adenosine + H2O + H(+) = inosine + NH4(+). It catalyses the reaction 2'-deoxyadenosine + H2O + H(+) = 2'-deoxyinosine + NH4(+). In terms of biological role, catalyzes the hydrolytic deamination of adenosine and 2-deoxyadenosine. This Klebsiella pneumoniae subsp. pneumoniae (strain ATCC 700721 / MGH 78578) protein is Adenosine deaminase.